The primary structure comprises 204 residues: High frequency lysogenization protein HflD homolog (204 aa).

The protein belongs to the HflD family.

The protein resides in the cytoplasm. It localises to the cell inner membrane. The sequence is that of High frequency lysogenization protein HflD homolog from Shewanella sediminis (strain HAW-EB3).